We begin with the raw amino-acid sequence, 211 residues long: Octanoyltransferase (211 aa).

Residues 32-207 enclose the BPL/LPL catalytic domain; sequence PCTYDEIWFV…ELSKFLEIFI (176 aa). Substrate contacts are provided by residues 71-78, 138-140, and 151-153; these read RGGQITYH, SLG, and GLA. The active-site Acyl-thioester intermediate is C169.

The protein belongs to the LipB family.

It is found in the cytoplasm. It catalyses the reaction octanoyl-[ACP] + L-lysyl-[protein] = N(6)-octanoyl-L-lysyl-[protein] + holo-[ACP] + H(+). Its pathway is protein modification; protein lipoylation via endogenous pathway; protein N(6)-(lipoyl)lysine from octanoyl-[acyl-carrier-protein]: step 1/2. In terms of biological role, catalyzes the transfer of endogenously produced octanoic acid from octanoyl-acyl-carrier-protein onto the lipoyl domains of lipoate-dependent enzymes. Lipoyl-ACP can also act as a substrate although octanoyl-ACP is likely to be the physiological substrate. The protein is Octanoyltransferase of Buchnera aphidicola subsp. Acyrthosiphon pisum (strain APS) (Acyrthosiphon pisum symbiotic bacterium).